A 986-amino-acid polypeptide reads, in one-letter code: MTSSAPGNADGQSRLAARFVAGPHVRAPDTAEHRLQDWLAELEPSLAASLRDQFASGWARSILLGIVESSPYLFDLIRADAQRLDRLLRCDPQTHLAELIARTGREVFACSGEADVMSLLRRLKSEAALLIALCDIGGVWPVMQVTAALTDVAVAAVQMALRHLLRQEAARGRLAPIDPAQPELGCGLFVLAMGKMGAGELNYSSDIDLIVFFDPDATTLAHDIEPQPFFVRVTQALARLLQSRTADGYVFRVDLRLRPDPASTQVAMSTEAALHYYEREGRTWERAAMIKARICAGDVAAGEAMLAELSPFVWRKHLDFQALTDVHDMKRQMQVYRGHSEIAVEGHNVKVGRGGIREIEFFAQTQQLIAGGRHPELRVRPTLQALDVLTASNWITAQARDELTSAYEFLRRVEHRLQMMADEQIHSLPDDVDGVARFACFFGYESRERFATDLLFHLDIVQGHYARLFEGDPTGTVSLPPVNYGAGPDEPRLLEHLVALGFRDPMMVALTLQQWLAGDYRVFRAEATRTTFNEFLPALIDGLAHADEPDRAVVAFDRFLQALQLGGRLITLLGQNRDLVALVALVLGAAPRLGDMLARQPRLMDGLIDPRFFGAIPDKRELSTRLAATLQDAGSYEEFLDRLRLFGQESLFLIGTRILSGTVSAQQAGTAFADVAEGIVHTVHNLVIERFAAQHGRIRGQETAIIAMGRLGAREMTASSDLDLILLYDFDADAPDSDGERPLQGAHYFARFTQRLISAFTSRTNYGVLYDIDMRLRPSGRAGPLASHIDSFAHYQEHEAWTWEHMALTRARVISASPAFRARIEAIIQTALRRSRDAQAIARDVADMRRAIAAEKGETDLWDLKHAAGGMVDIDFVAQYLQLVHAASKPEILDISSLQVLDHAERLGVLPRADAVILRHAARMYHDLTQILRLCVSDKFKPDQAGDDLLRVMTRAGDAPDFSALEARVRETQSEVRRVFTALLER.

Residues 1–473 form an adenylyl removase region; the sequence is MTSSAPGNAD…HYARLFEGDP (473 aa). The segment at 478 to 986 is adenylyl transferase; that stretch reads SLPPVNYGAG…RRVFTALLER (509 aa).

The protein belongs to the GlnE family. Mg(2+) serves as cofactor.

The catalysed reaction is [glutamine synthetase]-O(4)-(5'-adenylyl)-L-tyrosine + phosphate = [glutamine synthetase]-L-tyrosine + ADP. It catalyses the reaction [glutamine synthetase]-L-tyrosine + ATP = [glutamine synthetase]-O(4)-(5'-adenylyl)-L-tyrosine + diphosphate. Its function is as follows. Involved in the regulation of glutamine synthetase GlnA, a key enzyme in the process to assimilate ammonia. When cellular nitrogen levels are high, the C-terminal adenylyl transferase (AT) inactivates GlnA by covalent transfer of an adenylyl group from ATP to specific tyrosine residue of GlnA, thus reducing its activity. Conversely, when nitrogen levels are low, the N-terminal adenylyl removase (AR) activates GlnA by removing the adenylyl group by phosphorolysis, increasing its activity. The regulatory region of GlnE binds the signal transduction protein PII (GlnB) which indicates the nitrogen status of the cell. In Bradyrhizobium sp. (strain ORS 278), this protein is Bifunctional glutamine synthetase adenylyltransferase/adenylyl-removing enzyme.